We begin with the raw amino-acid sequence, 371 residues long: Thyroid transcription factor 1 (371 aa).

Residues 161–220 (RRKRRVLFSQAQVYELERRFKQQKYLSAPEREHLASMIHLTPTQVKIWFQNHRYKMKRQA) constitute a DNA-binding region (homeobox). Disordered regions lie at residues 219–294 (QAKD…QQQA) and 308–342 (SGGP…ALQG). The span at 233-243 (SGGGGGGGGAG) shows a compositional bias: gly residues. Low complexity-rich tracts occupy residues 244–253 (CPQQQQAQQQ) and 272–294 (AGAP…QQQA).

It belongs to the NK-2 homeobox family. Post-translationally, phosphorylated on serine residues. As to expression, thyroid, lung and CNS.

It is found in the nucleus. In terms of biological role, transcription factor that binds and activates the promoter of thyroid specific genes such as thyroglobulin, thyroperoxidase, and thyrotropin receptor. Crucial in the maintenance of the thyroid differentiation phenotype. May play a role in lung development and surfactant homeostasis. This is Thyroid transcription factor 1 (TITF1) from Canis lupus familiaris (Dog).